Consider the following 189-residue polypeptide: UPF0398 protein lp_1753 (189 aa).

It belongs to the UPF0398 family.

The polypeptide is UPF0398 protein lp_1753 (Lactiplantibacillus plantarum (strain ATCC BAA-793 / NCIMB 8826 / WCFS1) (Lactobacillus plantarum)).